The sequence spans 155 residues: Chromosomal passenger complex protein bir-1 (155 aa).

The BIR repeat unit spans residues 20–87 (RLMTFKNFEY…KRDEPCEFVR (68 aa)). Zn(2+) contacts are provided by Cys57, Cys60, His76, and Cys83.

The protein belongs to the IAP family. Component of the CPC complex which consists of icp-1; csc-1; bir-1 and air-2. Within the complex, interacts with csc-1, icp-1 and air-2. Interacts with csc-1 in a zinc-dependent-manner; the interaction is direct. In terms of tissue distribution, expressed in oocytes and sperm.

The protein resides in the chromosome. It localises to the cytoplasm. It is found in the cytoskeleton. Its subcellular location is the spindle. The protein localises to the midbody. In terms of biological role, component of the chromosomal passenger complex (CPC), a complex that acts as a key regulator of chromosome segregation and cytokinesis. The CPC complex has essential functions at the centromere in ensuring correct chromosome condensation, alignment and segregation. In the complex, required to direct the Aurora B/air-2 kinase to chromosomes. Also functions in spindle midzone formation and in the formation of polar bodies during oogenesis. Required for the localization of the kinetochore component hcp-1 to chromosomes. Involved in the positive regulation of transcription. Involved in the transcriptional regulation of collagen genes. The sequence is that of Chromosomal passenger complex protein bir-1 from Caenorhabditis elegans.